A 129-amino-acid chain; its full sequence is Large ribosomal subunit protein bL20 (129 aa).

It belongs to the bacterial ribosomal protein bL20 family.

Its function is as follows. Binds directly to 23S ribosomal RNA and is necessary for the in vitro assembly process of the 50S ribosomal subunit. It is not involved in the protein synthesizing functions of that subunit. The chain is Large ribosomal subunit protein bL20 from Mycobacterium marinum (strain ATCC BAA-535 / M).